We begin with the raw amino-acid sequence, 803 residues long: Zinc finger and BTB domain-containing protein 17 (803 aa).

Positions 1–104 (MDFPQHSQHV…VATFLQMQDI (104 aa)) constitute a BTB domain. Residues 116-295 (EPATSPGGNA…GLRSGTYGDR (180 aa)) are disordered. The residue at position 120 (S120) is a Phosphoserine. The segment covering 132–142 (GGDKRAKEEKV) has biased composition (basic and acidic residues). 2 stretches are compositionally biased toward low complexity: residues 171–180 (GQAQSAASGA) and 206–217 (AAAEAEAALSES). Acidic residues-rich tracts occupy residues 233–244 (EQKEQEEQEEEG) and 261–272 (EAPEENENEESA). Residues 269–308 (EESAGTDSGQELGSEARGLRSGTYGDRTESKAYGSVIHKC) form an interaction with MYC region. 13 consecutive C2H2-type zinc fingers follow at residues 306–328 (HKCEDCGKEFTHTGNFKRHIRIH), 334–356 (FSCRECSKAFSDPAACKAHEKTH), 362–384 (YGCEECGKSYRLISLLNLHKKRH), 390–412 (YRCEDCGKLFTTSGNLKRHQLVH), 418–440 (YQCDYCGRSFSDPTSKMRHLETH), 446–468 (HKCPHCDKKFNQVGNLKAHLKIH), 474–496 (LKCRECGKQFTTSGNLKRHLRIH), 502–524 (YVCIHCQRQFADPGALQRHVRIH), 530–552 (CQCVMCGKAFTQASSLIAHVRQH), 558–580 (YVCERCGKRFVQSSQLANHIRHH), 586–608 (HKCSVCSKAFVNVGDLSKHIIIH), 614–637 (YLCDKCGRGFNRVDNLRSHVKTVH), and 717–739 (YACDSCGDKFLDANSLAQHVRIH). A Glycyl lysine isopeptide (Lys-Gly) (interchain with G-Cter in ubiquitin) cross-link involves residue K397. Residue K481 forms a Glycyl lysine isopeptide (Lys-Gly) (interchain with G-Cter in ubiquitin) linkage. An interaction with MYC region spans residues 637 to 718 (HQGKAGIKIL…EDPNTHILYA (82 aa)). Residues 637–803 (HQGKAGIKIL…TAPECPPPAE (167 aa)) form an interaction with HCFC1 region. A disordered region spans residues 779 to 803 (RDGAEGQPALAETSPTAPECPPPAE).

Belongs to the krueppel C2H2-type zinc-finger protein family. In terms of assembly, homooligomerizes (via the BTB/POZ domain), multimerization is required for DNA binding. Interacts (via the C-terminal zinc fingers) with GIF1; the interaction results in the recruitment of MYB to the CDKN1A/p21 and CDKN1B promoters and repression of transcription. Interacts with TRAF2, interfering with the binding of UBC13 to TRAF2, and inhibiting TRAF2 E3 ligase activity. Interacts with MYC (via the C-terminal helix-loop-helix motif); the interaction inhibits ZBTB17 transactivation and growth arrest activities and renders it insoluble in the nucleus. Also interacts with HCFC1, MAGEA4 and TMPRSS11A. Interacts with BCL6; the interaction inhibits ZBTB17 transactivation activity on target genes involved in cell cycle arrest. Interacts with ZBTB49 isoform 3/ZNF509S1; this interaction blocks ZBTB17-mediated repression of RB1. Undergoes 'Lys-48'-linked polyubiquitination at Lys-397 and Lys-481 and subsequent proteasomal degradation in a TRAF2-dependent manner. In terms of tissue distribution, expressed in germinal center B-cells.

It localises to the nucleus. Its function is as follows. Transcription factor that can function as an activator or repressor depending on its binding partners, and by targeting negative regulators of cell cycle progression. Plays a critical role in early lymphocyte development, where it is essential to prevent apoptosis in lymphoid precursors, allowing them to survive in response to IL7 and undergo proper lineage commitment. Has been shown to bind to the promoters of adenovirus major late protein and cyclin D1 and activate transcription. Required for early embryonic development during gastrulation. Represses RB1 transcription; this repression can be blocked by interaction with ZBTB49 isoform 3/ZNF509S1. In Homo sapiens (Human), this protein is Zinc finger and BTB domain-containing protein 17 (ZBTB17).